A 275-amino-acid chain; its full sequence is Energy-coupling factor transporter ATP-binding protein EcfA1 (275 aa).

The ABC transporter domain maps to 5–240 (IDVKNLSFRY…NDLDQIGLDD (236 aa)). Position 40-47 (40-47 (GHNGSGKS)) interacts with ATP.

This sequence belongs to the ABC transporter superfamily. Energy-coupling factor EcfA family. In terms of assembly, forms a stable energy-coupling factor (ECF) transporter complex composed of 2 membrane-embedded substrate-binding proteins (S component), 2 ATP-binding proteins (A component) and 2 transmembrane proteins (T component).

Its subcellular location is the cell membrane. In terms of biological role, ATP-binding (A) component of a common energy-coupling factor (ECF) ABC-transporter complex. Unlike classic ABC transporters this ECF transporter provides the energy necessary to transport a number of different substrates. The chain is Energy-coupling factor transporter ATP-binding protein EcfA1 from Streptococcus pneumoniae serotype 4 (strain ATCC BAA-334 / TIGR4).